Consider the following 139-residue polypeptide: Transcription antitermination protein NusB (139 aa).

Belongs to the NusB family.

Involved in transcription antitermination. Required for transcription of ribosomal RNA (rRNA) genes. Binds specifically to the boxA antiterminator sequence of the ribosomal RNA (rrn) operons. The sequence is that of Transcription antitermination protein NusB from Salmonella agona (strain SL483).